The sequence spans 454 residues: tRNA-2-methylthio-N(6)-dimethylallyladenosine synthase (454 aa).

The MTTase N-terminal domain occupies arginine 6–serine 122. The [4Fe-4S] cluster site is built by cysteine 15, cysteine 51, cysteine 85, cysteine 157, cysteine 161, and cysteine 164. A Radical SAM core domain is found at arginine 143–arginine 384. One can recognise a TRAM domain in the interval glutamine 383–serine 447.

The protein belongs to the methylthiotransferase family. MiaB subfamily. In terms of assembly, monomer. Requires [4Fe-4S] cluster as cofactor.

Its subcellular location is the cytoplasm. It catalyses the reaction N(6)-dimethylallyladenosine(37) in tRNA + (sulfur carrier)-SH + AH2 + 2 S-adenosyl-L-methionine = 2-methylsulfanyl-N(6)-dimethylallyladenosine(37) in tRNA + (sulfur carrier)-H + 5'-deoxyadenosine + L-methionine + A + S-adenosyl-L-homocysteine + 2 H(+). Catalyzes the methylthiolation of N6-(dimethylallyl)adenosine (i(6)A), leading to the formation of 2-methylthio-N6-(dimethylallyl)adenosine (ms(2)i(6)A) at position 37 in tRNAs that read codons beginning with uridine. This is tRNA-2-methylthio-N(6)-dimethylallyladenosine synthase from Acaryochloris marina (strain MBIC 11017).